Here is a 286-residue protein sequence, read N- to C-terminus: Translocon-associated protein subunit alpha (286 aa).

The signal sequence occupies residues 1-18 (MRLLPRLLLLLLLVFPAT). Residues 19–207 (VLFRGGPRGL…EREDGLDGET (189 aa)) are Lumenal-facing. Residues 39-75 (EETVEDSIIEDEDDEAEVEEDEPTDLVEDKEEEDVSG) show a composition bias toward acidic residues. The segment at 39-83 (EETVEDSIIEDEDDEAEVEEDEPTDLVEDKEEEDVSGEPEASPSA) is disordered. N-linked (GlcNAc...) asparagine glycans are attached at residues asparagine 136 and asparagine 191. A helical membrane pass occupies residues 208–228 (IFMYMFLAGLGLLVIVGLHQL). Over 229 to 286 (LESRKRKRPIQKVEMGTSSQNDVDMSWIPQETLNQINKASPRRLPRKRAQKRSVGSDE) the chain is Cytoplasmic. At serine 247 the chain carries Phosphoserine. Phosphothreonine is present on threonine 260. Residues 261–286 (LNQINKASPRRLPRKRAQKRSVGSDE) form a disordered region. Position 268 is a phosphoserine (serine 268). Over residues 268–279 (SPRRLPRKRAQK) the composition is skewed to basic residues.

It belongs to the TRAP-alpha family. Heterotetramer of TRAP-alpha, TRAP-beta, TRAP-delta and TRAP-gamma. Interacts with palmitoylated calnexin (CALX), the interaction is required for efficient folding of glycosylated proteins.

Its subcellular location is the endoplasmic reticulum membrane. In terms of biological role, TRAP proteins are part of a complex whose function is to bind calcium to the ER membrane and thereby regulate the retention of ER resident proteins. May be involved in the recycling of the translocation apparatus after completion of the translocation process or may function as a membrane-bound chaperone facilitating folding of translocated proteins. The chain is Translocon-associated protein subunit alpha (SSR1) from Homo sapiens (Human).